A 354-amino-acid polypeptide reads, in one-letter code: Guanine nucleotide-binding protein alpha-12 subunit (354 aa).

Positions 31 to 354 constitute a G-alpha domain; it reads QPLKLLLLGS…SLLMNVAEIL (324 aa). The interval 34-47 is G1 motif; sequence KLLLLGSGECGKST. Residues 39–46, 178–184, 203–207, 272–275, and Ala329 each bind GTP; these read GSGECGKS, LRVRVKT, DVGGQ, and NKID. Positions 46 and 184 each coordinate Mg(2+). Positions 176–184 are G2 motif; that stretch reads DFLRVRVKT. Positions 199–208 are G3 motif; sequence FKLVDVGGQK. Positions 268–275 are G4 motif; that stretch reads VLFFNKID. The segment at 327–332 is G5 motif; sequence TCALDS.

It belongs to the G-alpha family. As to quaternary structure, g proteins are composed of 3 units; alpha, beta and gamma. The alpha chain contains the guanine nucleotide binding site.

Functionally, guanine nucleotide-binding proteins (G proteins) are involved as modulators or transducers in various transmembrane signaling systems. The chain is Guanine nucleotide-binding protein alpha-12 subunit (gpaL) from Dictyostelium discoideum (Social amoeba).